Consider the following 204-residue polypeptide: UPF0215 protein MTH_1316 (204 aa).

This sequence belongs to the UPF0215 family.

The polypeptide is UPF0215 protein MTH_1316 (Methanothermobacter thermautotrophicus (strain ATCC 29096 / DSM 1053 / JCM 10044 / NBRC 100330 / Delta H) (Methanobacterium thermoautotrophicum)).